Reading from the N-terminus, the 243-residue chain is Ornithine decarboxylase antizyme 3 (243 aa).

Serine 6, serine 9, and serine 12 each carry phosphoserine.

This sequence belongs to the ODC antizyme family. Interacts with ODC1 and thereby sterically blocks ODC homodimerization. Interacts with AZIN2; this interaction disrupts the interaction between the antizyme and ODC1. Interacts with GGN. In terms of tissue distribution, testis specific. Expressed throughout the differentiation process from spermatids to spermatozoa in the inner part of the seminiferous tubules.

The protein localises to the nucleus. Its subcellular location is the cytoplasm. Ornithine decarboxylase (ODC) antizyme protein that negatively regulates ODC activity and intracellular polyamine biosynthesis and uptake in response to increased intracellular polyamine levels. Binds to ODC monomers, inhibiting the assembly of the functional ODC homodimers. Does not target the ODC monomers for degradation, which allows a protein synthesis-independent restoration of ODC activity. Stabilizes AZIN2 by interfering with its ubiquitination. Involved in the translocation of AZNI2 from ER-Golgi intermediate compartment (ERGIC) to the cytosol. Probably plays a key role in spermatogenesis by regulating the intracellular concentration of polyamines in haploid germ cells. This is Ornithine decarboxylase antizyme 3 (Oaz3) from Mus musculus (Mouse).